Consider the following 208-residue polypeptide: MNVQHKLVLASGSPRRIELLGQAGIEPDRIHPADIDETPQRAEHPRSLARRLSRDKARKAHEQLQGEAGFSGALVLAADTVVAVGRRILPKAEIEDEARECLRLLSGRTHKVFTGVCLVLPNGNLRQTLVETRLRFERLSRLQINAYLSSGEWRGKAGGYAIQGLAGSFVVKLVGSYTNVVGLPLQETVGLLADGGYPVYANWGTGKV.

A disordered region spans residues Asp-28 to Leu-48. Asp-79 serves as the catalytic Proton acceptor.

It belongs to the Maf family. YhdE subfamily. Requires a divalent metal cation as cofactor.

It localises to the cytoplasm. The catalysed reaction is dTTP + H2O = dTMP + diphosphate + H(+). The enzyme catalyses UTP + H2O = UMP + diphosphate + H(+). Its function is as follows. Nucleoside triphosphate pyrophosphatase that hydrolyzes dTTP and UTP. May have a dual role in cell division arrest and in preventing the incorporation of modified nucleotides into cellular nucleic acids. In Brucella abortus (strain 2308), this protein is dTTP/UTP pyrophosphatase.